A 317-amino-acid polypeptide reads, in one-letter code: Eukaryotic translation initiation factor 2 subunit 2 (317 aa).

The disordered stretch occupies residues 1 to 146 (MSATEEENVL…KEKTITTSDG (146 aa)). Over residues 79–90 (AIEKLENEGAHD) the composition is skewed to basic and acidic residues. Low complexity predominate over residues 109–125 (KSSTTTTTSTTTTTTEP). The C4-type zinc finger occupies 222–246 (HVYNYVFAELGTNGSIDGNQRLVIR).

Belongs to the eIF-2-beta/eIF-5 family. As to quaternary structure, eukaryotic translation initiation factor 2 eIF2 is a heterotrimeric complex composed of an alpha, a beta and a gamma subunit.

Its subcellular location is the cytoplasm. It is found in the cytosol. Its function is as follows. Component of the eIF2 complex that functions in the early steps of protein synthesis by forming a ternary complex with GTP and initiator tRNA. This complex binds to a 40S ribosomal subunit, followed by mRNA binding to form a 43S pre-initiation complex (43S PIC). Junction of the 60S ribosomal subunit to form the 80S initiation complex is preceded by hydrolysis of the GTP bound to eIF2 and release of an eIF2-GDP binary complex. In order for eIF2 to recycle and catalyze another round of initiation, the GDP bound to eIF2 must exchange with GTP by way of a reaction catalyzed by eIF2B. This Dictyostelium discoideum (Social amoeba) protein is Eukaryotic translation initiation factor 2 subunit 2 (eif2s2).